The following is a 456-amino-acid chain: Palmitoyltransferase PFA4 (456 aa).

Topologically, residues 1–9 (MAARNWSRV) are cytoplasmic. Residues 10–30 (WVGGTVILISFIAFSSQIFVI) traverse the membrane as a helical segment. At 31–37 (WPWYGRE) the chain is on the lumenal side. The chain crosses the membrane as a helical span at residues 38-58 (ISLDLLMLLVPLNLAAFMIFW). Residues 59–138 (NYRLCVITSP…GNCVGFYNQG (80 aa)) are Cytoplasmic-facing. Residues 95–145 (RYCKNCAHYKPPRAHHCRQCKTCWLKLDHHCPWIGNCVGFYNQGHFIRFLL) form the DHHC domain. Cys125 functions as the S-palmitoyl cysteine intermediate in the catalytic mechanism. Residues 139-159 (HFIRFLLWVDIGTTFHLIIMV) form a helical membrane-spanning segment. The Lumenal portion of the chain corresponds to 160–176 (RRVLYIAEYYHEPTLAD). The chain crosses the membrane as a helical span at residues 177-197 (VLFLVFNFATCVPVWLCVGMF). The Cytoplasmic portion of the chain corresponds to 198–456 (SIYHVYLACG…DPEEESGYTH (259 aa)). The interval 284-377 (PPQDPSRLPN…YDHYDEGPMY (94 aa)) is disordered. Residues 285 to 298 (PQDPSRLPNPPPIP) show a composition bias toward pro residues. The span at 309-321 (NGFNPNLRPTNSL) shows a compositional bias: polar residues. Positions 337–352 (SHEQGRHYSSGDERDN) are enriched in basic and acidic residues.

It belongs to the DHHC palmitoyltransferase family. PFA4 subfamily.

It localises to the endoplasmic reticulum membrane. It carries out the reaction L-cysteinyl-[protein] + hexadecanoyl-CoA = S-hexadecanoyl-L-cysteinyl-[protein] + CoA. Functionally, mediates the reversible addition of palmitate to target proteins, thereby regulating their membrane association and biological function. Responsible for the modification of a subset of proteins that are critical in cryptococcal pathogenesis, with substrates involved in cell wall synthesis, signal transduction, and membrane trafficking. Palmitoylates chitin synthase CHS3. This Cryptococcus neoformans var. grubii serotype A (strain H99 / ATCC 208821 / CBS 10515 / FGSC 9487) (Filobasidiella neoformans var. grubii) protein is Palmitoyltransferase PFA4.